A 275-amino-acid polypeptide reads, in one-letter code: 2,3,4,5-tetrahydropyridine-2,6-dicarboxylate N-succinyltransferase (275 aa).

Residues R108 and D145 each contribute to the substrate site.

It belongs to the transferase hexapeptide repeat family. Homotrimer.

The protein resides in the cytoplasm. It catalyses the reaction (S)-2,3,4,5-tetrahydrodipicolinate + succinyl-CoA + H2O = (S)-2-succinylamino-6-oxoheptanedioate + CoA. Its pathway is amino-acid biosynthesis; L-lysine biosynthesis via DAP pathway; LL-2,6-diaminopimelate from (S)-tetrahydrodipicolinate (succinylase route): step 1/3. This is 2,3,4,5-tetrahydropyridine-2,6-dicarboxylate N-succinyltransferase from Roseobacter denitrificans (strain ATCC 33942 / OCh 114) (Erythrobacter sp. (strain OCh 114)).